A 230-amino-acid polypeptide reads, in one-letter code: NAD(P)H-hydrate epimerase (230 aa).

The region spanning 11-218 (AIAVDQELFN…ALQRKYELNL (208 aa)) is the YjeF N-terminal domain. Residue 61-65 (NNGGD) coordinates (6S)-NADPHX. Asn62 and Asp126 together coordinate K(+). (6S)-NADPHX contacts are provided by residues 130–136 (GFSFKPP) and Asp159. Ser162 is a K(+) binding site.

This sequence belongs to the NnrE/AIBP family. K(+) serves as cofactor.

The enzyme catalyses (6R)-NADHX = (6S)-NADHX. It catalyses the reaction (6R)-NADPHX = (6S)-NADPHX. Its function is as follows. Catalyzes the epimerization of the S- and R-forms of NAD(P)HX, a damaged form of NAD(P)H that is a result of enzymatic or heat-dependent hydration. This is a prerequisite for the S-specific NAD(P)H-hydrate dehydratase to allow the repair of both epimers of NAD(P)HX. This Drosophila melanogaster (Fruit fly) protein is NAD(P)H-hydrate epimerase.